The chain runs to 22 residues: Melittin-related peptide FQ-22-1 (22 aa).

Gln-22 is modified (glutamine amide).

In terms of tissue distribution, expressed by the skin glands.

Its subcellular location is the secreted. The chain is Melittin-related peptide FQ-22-1 from Rana arvalis (Moor frog).